The sequence spans 133 residues: Ribonuclease P protein component (133 aa).

Belongs to the RnpA family. Consists of a catalytic RNA component (M1 or rnpB) and a protein subunit.

The enzyme catalyses Endonucleolytic cleavage of RNA, removing 5'-extranucleotides from tRNA precursor.. Its function is as follows. RNaseP catalyzes the removal of the 5'-leader sequence from pre-tRNA to produce the mature 5'-terminus. It can also cleave other RNA substrates such as 4.5S RNA. The protein component plays an auxiliary but essential role in vivo by binding to the 5'-leader sequence and broadening the substrate specificity of the ribozyme. The sequence is that of Ribonuclease P protein component from Pseudomonas savastanoi pv. phaseolicola (strain 1448A / Race 6) (Pseudomonas syringae pv. phaseolicola (strain 1448A / Race 6)).